The following is a 232-amino-acid chain: Large ribosomal subunit protein uL1 (232 aa).

Belongs to the universal ribosomal protein uL1 family. In terms of assembly, part of the 50S ribosomal subunit.

In terms of biological role, binds directly to 23S rRNA. The L1 stalk is quite mobile in the ribosome, and is involved in E site tRNA release. Protein L1 is also a translational repressor protein, it controls the translation of the L11 operon by binding to its mRNA. The polypeptide is Large ribosomal subunit protein uL1 (Burkholderia cenocepacia (strain ATCC BAA-245 / DSM 16553 / LMG 16656 / NCTC 13227 / J2315 / CF5610) (Burkholderia cepacia (strain J2315))).